A 131-amino-acid polypeptide reads, in one-letter code: Small ribosomal subunit protein bS6 (131 aa).

The disordered stretch occupies residues Glu-98 to Glu-131. Positions Lys-104–Phe-116 are enriched in basic and acidic residues. Residues Thr-120 to Glu-131 show a composition bias toward acidic residues.

This sequence belongs to the bacterial ribosomal protein bS6 family.

Binds together with bS18 to 16S ribosomal RNA. This Edwardsiella ictaluri (strain 93-146) protein is Small ribosomal subunit protein bS6.